Here is a 252-residue protein sequence, read N- to C-terminus: Ribosome maturation factor RimP (252 aa).

The interval 188–252 (QGAAPGTEGG…PAAGPGAQDE (65 aa)) is disordered. The span at 208–224 (ARRPHQPKPKKAKKKGP) shows a compositional bias: basic residues.

This sequence belongs to the RimP family.

It localises to the cytoplasm. Functionally, required for maturation of 30S ribosomal subunits. This is Ribosome maturation factor RimP from Rhodospirillum centenum (strain ATCC 51521 / SW).